Here is a 60-residue protein sequence, read N- to C-terminus: UPF0434 protein Rfer_3156 (60 aa).

This sequence belongs to the UPF0434 family.

The polypeptide is UPF0434 protein Rfer_3156 (Albidiferax ferrireducens (strain ATCC BAA-621 / DSM 15236 / T118) (Rhodoferax ferrireducens)).